The primary structure comprises 211 residues: MTRKSVALLDYGSGNLHSAERALVRAGADVRVTADPDAALAVDGLVVPGVGAFAACMAGLRAVRGEKIIGQRLAGGRPVLGICVGMQILFERGVEFGVETEGCAEWPGVVERLDAPVLPHMGWNTVSAPADSVLFAGMDADTRFYFVHSYAAQRWELPPNEHFAAPKLTWAEHGVRFLAAVENGPLSATQFHPEKSGDAGAQLLRNWVDSL.

The 207-residue stretch at 5-211 folds into the Glutamine amidotransferase type-1 domain; it reads SVALLDYGSG…QLLRNWVDSL (207 aa). Cys-83 functions as the Nucleophile in the catalytic mechanism. Residues His-192 and Glu-194 contribute to the active site.

Heterodimer of HisH and HisF.

It is found in the cytoplasm. The enzyme catalyses 5-[(5-phospho-1-deoxy-D-ribulos-1-ylimino)methylamino]-1-(5-phospho-beta-D-ribosyl)imidazole-4-carboxamide + L-glutamine = D-erythro-1-(imidazol-4-yl)glycerol 3-phosphate + 5-amino-1-(5-phospho-beta-D-ribosyl)imidazole-4-carboxamide + L-glutamate + H(+). It carries out the reaction L-glutamine + H2O = L-glutamate + NH4(+). Its pathway is amino-acid biosynthesis; L-histidine biosynthesis; L-histidine from 5-phospho-alpha-D-ribose 1-diphosphate: step 5/9. IGPS catalyzes the conversion of PRFAR and glutamine to IGP, AICAR and glutamate. The HisH subunit catalyzes the hydrolysis of glutamine to glutamate and ammonia as part of the synthesis of IGP and AICAR. The resulting ammonia molecule is channeled to the active site of HisF. The sequence is that of Imidazole glycerol phosphate synthase subunit HisH from Nocardia farcinica (strain IFM 10152).